A 471-amino-acid polypeptide reads, in one-letter code: Trigger factor (471 aa).

Residues glycine 165 to proline 244 form the PPIase FKBP-type domain. Residues valine 407 to serine 471 are disordered. A compositionally biased stretch (acidic residues) spans aspartate 416–proline 443.

Belongs to the FKBP-type PPIase family. Tig subfamily.

Its subcellular location is the cytoplasm. It carries out the reaction [protein]-peptidylproline (omega=180) = [protein]-peptidylproline (omega=0). In terms of biological role, involved in protein export. Acts as a chaperone by maintaining the newly synthesized protein in an open conformation. Functions as a peptidyl-prolyl cis-trans isomerase. This Kineococcus radiotolerans (strain ATCC BAA-149 / DSM 14245 / SRS30216) protein is Trigger factor.